A 244-amino-acid chain; its full sequence is Phosphoadenosine 5'-phosphosulfate reductase (244 aa).

The Nucleophile; cysteine thiosulfonate intermediate role is filled by cysteine 239.

Belongs to the PAPS reductase family. CysH subfamily.

The protein resides in the cytoplasm. It catalyses the reaction [thioredoxin]-disulfide + sulfite + adenosine 3',5'-bisphosphate + 2 H(+) = [thioredoxin]-dithiol + 3'-phosphoadenylyl sulfate. It functions in the pathway sulfur metabolism; hydrogen sulfide biosynthesis; sulfite from sulfate: step 3/3. In terms of biological role, catalyzes the formation of sulfite from phosphoadenosine 5'-phosphosulfate (PAPS) using thioredoxin as an electron donor. In Salmonella arizonae (strain ATCC BAA-731 / CDC346-86 / RSK2980), this protein is Phosphoadenosine 5'-phosphosulfate reductase.